A 176-amino-acid polypeptide reads, in one-letter code: Putative metal-dependent hydrolase BLi00869/BLi00870/BL03027 (176 aa).

Residues H65, H158, and H162 each contribute to the Zn(2+) site.

This sequence belongs to the metal hydrolase YfiT family. In terms of assembly, homodimer. Zn(2+) serves as cofactor.

The protein localises to the cytoplasm. Possible metal-dependent hydrolase. This is Putative metal-dependent hydrolase BLi00869/BLi00870/BL03027 from Bacillus licheniformis (strain ATCC 14580 / DSM 13 / JCM 2505 / CCUG 7422 / NBRC 12200 / NCIMB 9375 / NCTC 10341 / NRRL NRS-1264 / Gibson 46).